The sequence spans 443 residues: D(2) dopamine receptor (443 aa).

The Extracellular segment spans residues 1–37 (MDPLNLSWYDDDPESRNWSRPFNGSEGKVGKPHYNYY). N-linked (GlcNAc...) asparagine glycosylation is found at asparagine 5, asparagine 17, and asparagine 23. Residues 38-60 (AMLLTLLIFVIVFGNVLVCMAVS) form a helical membrane-spanning segment. Topologically, residues 61–70 (REKALQTTTN) are cytoplasmic. Residues 71–93 (YLIVSLAVADLLVATLVMPWVVY) traverse the membrane as a helical segment. At 94–108 (LEVVGEWKFSRIHCD) the chain is on the extracellular side. Cysteines 107 and 182 form a disulfide. A helical transmembrane segment spans residues 109-130 (IFVTLDVMMCTASILNLCAISI). Residues 131–151 (DRYTAVAMPMLYNTRYSSKRR) are Cytoplasmic-facing. A helical membrane pass occupies residues 152-172 (VTVMIAIVWVLSFTISCPLLF). The Extracellular portion of the chain corresponds to 173-188 (GLNNTDQNECIIANPA). The chain crosses the membrane as a helical span at residues 189-213 (FVVYSSVVSFYVPFIVTLLVYIKIY). An interaction with PPP1R9B region spans residues 211-373 (KIYIVLRRRR…SQQKEKKATQ (163 aa)). At 214–373 (IVLRRRRKRV…SQQKEKKATQ (160 aa)) the chain is on the cytoplasmic side. Residues 282-331 (EMLSSTSPPERTRYSPIPPSHHQLTLPDPSHHGLHSTANSPVKPEKNGHA) form a disordered region. Residues 374 to 395 (MLAIVLGVFIICWLPFFITHIL) traverse the membrane as a helical segment. Residues 396–409 (NIHCDCNIPPVLYS) are Extracellular-facing. Cysteine 399 and cysteine 401 are disulfide-bonded. A helical membrane pass occupies residues 410–431 (AFTWLGYVNSAVNPIIYTTFNV). Residues 432 to 443 (EFRKAFMKILHC) are Cytoplasmic-facing. Cysteine 443 carries S-palmitoyl cysteine lipidation.

The protein belongs to the G-protein coupled receptor 1 family. In terms of assembly, forms homo- and heterooligomers with DRD4. The interaction with DRD4 may modulate agonist-induced downstream signaling. Interacts with CADPS and CADPS2. Interacts with GPRASP1, PPP1R9B and CLIC6. Interacts with ARRB2. Interacts with HTR2A. Interacts with DRD1. Interacts with KCNA2. In terms of processing, palmitoylated. Palmitoylation which is required for proper localization to the plasma membrane and stability of the receptor could be carried on by ZDHHC4, ZDHHC3 and ZDHHC8.

The protein localises to the cell membrane. Its subcellular location is the golgi apparatus membrane. Dopamine receptor whose activity is mediated by G proteins which inhibit adenylyl cyclase. Positively regulates postnatal regression of retinal hyaloid vessels via suppression of VEGFR2/KDR activity, downstream of OPN5. The sequence is that of D(2) dopamine receptor (DRD2) from Mustela putorius furo (European domestic ferret).